The primary structure comprises 436 residues: MSTKPEKPIWMSQEDYDRQYGSITGDESSTVSKKDSKVTANAPGDGNGSLPVLQSSSILTSKVSDLPIEAESGFKIQKRRHERYDQEERLRKQRAQKLREEQLKRHEIEMTANRSINVDQIVREHYNERTIIANRAKRNLSPIIKLRNFNNAIKYMLIDKYTKPGDVVLELGCGKGGDLRKYGAAGISQFIGIDISNASIQEAHKRYRSMRNLDYQVVLITGDCFGESLGVAVEPFPDCRFPCDIVSTQFCLHYAFETEEKARRALLNVAKSLKIGGHFFGTIPDSEFIRYKLNKFPKEVEKPSWGNSIYKVTFENNSYQKNDYEFTSPYGQMYTYWLEDAIDNVPEYVVPFETLRSLADEYGLELVSQMPFNKFFVQEIPKWIERFSPKMREGLQRSDGRYGVEGDEKEAASYFYTMFAFRKVKQYIEPESVKPN.

The segment at 1–50 (MSTKPEKPIWMSQEDYDRQYGSITGDESSTVSKKDSKVTANAPGDGNGSL) is disordered. The mRNA cap 0 methyltransferase domain occupies 141 to 424 (SPIIKLRNFN…FYTMFAFRKV (284 aa)). 150-151 (NN) is a binding site for mRNA. Residues K154, G172, D194, D223, Q249, and Y254 each coordinate S-adenosyl-L-methionine.

It belongs to the class I-like SAM-binding methyltransferase superfamily. mRNA cap 0 methyltransferase family.

The protein localises to the nucleus. It catalyses the reaction a 5'-end (5'-triphosphoguanosine)-ribonucleoside in mRNA + S-adenosyl-L-methionine = a 5'-end (N(7)-methyl 5'-triphosphoguanosine)-ribonucleoside in mRNA + S-adenosyl-L-homocysteine. Its function is as follows. Responsible for methylating the 5'-cap structure of mRNAs. The protein is mRNA cap guanine-N(7) methyltransferase (ABD1) of Saccharomyces cerevisiae (strain ATCC 204508 / S288c) (Baker's yeast).